A 927-amino-acid polypeptide reads, in one-letter code: Dual serine/threonine and tyrosine protein kinase (927 aa).

The disordered stretch occupies residues 1 to 21; the sequence is MEADGQSWAGESVSGPGPGGG. A coiled-coil region spans residues 393-429; that stretch reads RKKENELYESLMNIANRKQEEMKDMIVETLNTMKEEL. The 255-residue stretch at 650 to 904 folds into the Protein kinase domain; the sequence is PKLGQELGRG…PLLGIVQPML (255 aa). ATP-binding positions include 656–664 and K679; that span reads LGRGQYGVV. The Proton acceptor role is filled by D775.

Belongs to the protein kinase superfamily. Ser/Thr protein kinase family. In terms of tissue distribution, expressed in brain, heart, skeletal muscle, kidney and lung. Expressed in maturing tubular epithelia, with the most prominent expression in the medulla and the papilla. Expressed in thin ascending limb of the loop of Henle and the distal convoluted tubule. Expressed in all layers of transitional ureteric epithelium and in the ureteric smooth-muscle cells (at protein level). Widely expressed. Highly expressed in many brain regions, including in cerebellum, olfactory, hippocampus and cerebral cortex.

Its subcellular location is the cytoplasm. The protein resides in the cell membrane. It localises to the apical cell membrane. The protein localises to the basolateral cell membrane. It is found in the cell junction. It carries out the reaction L-seryl-[protein] + ATP = O-phospho-L-seryl-[protein] + ADP + H(+). The enzyme catalyses L-threonyl-[protein] + ATP = O-phospho-L-threonyl-[protein] + ADP + H(+). It catalyses the reaction L-tyrosyl-[protein] + ATP = O-phospho-L-tyrosyl-[protein] + ADP + H(+). In terms of biological role, acts as a positive regulator of ERK phosphorylation downstream of fibroblast growth factor-receptor activation. Involved in the regulation of both caspase-dependent apoptosis and caspase-independent cell death. In the skin, it plays a predominant role in suppressing caspase-dependent apoptosis in response to UV stress in a range of dermal cell types. The chain is Dual serine/threonine and tyrosine protein kinase (Dstyk) from Mus musculus (Mouse).